The sequence spans 123 residues: Probable U6 snRNA-associated Sm-like protein LSm4 (123 aa).

The region spanning 3–76 is the Sm domain; it reads LPLSLLKTAQ…IKYLRIPETV (74 aa). Residues 85 to 97 are compositionally biased toward basic and acidic residues; it reads NEVRRQQQREQSR. Residues 85–123 are disordered; the sequence is NEVRRQQQREQSRGRGGGRGGRGGHRGGGGNRGGRGGAR. The segment covering 98–123 has biased composition (gly residues); the sequence is GRGGGRGGRGGHRGGGGNRGGRGGAR.

This sequence belongs to the snRNP Sm proteins family. In terms of assembly, component of the precatalytic spliceosome (spliceosome B complex). Component of the U4/U6-U5 tri-snRNP complex, a building block of the precatalytic spliceosome (spliceosome B complex). LSM2, LSM3, LSM4, LSM5, LSM6, LSM7 and LSM8 form a heptameric, ring-shaped subcomplex (the LSM2-8 complex) that is part of the U4/U6-U5 tri-snRNP complex and the precatalytic spliceosome.

The protein localises to the nucleus. Its function is as follows. Plays a role in pre-mRNA splicing as component of the U4/U6-U5 tri-snRNP complex that is involved in spliceosome assembly, and as component of the precatalytic spliceosome (spliceosome B complex). The heptameric LSM2-8 complex binds specifically to the 3'-terminal U-tract of U6 snRNA. This is Probable U6 snRNA-associated Sm-like protein LSm4 (lsm-4) from Caenorhabditis elegans.